The following is a 382-amino-acid chain: Glutamate 5-kinase (382 aa).

Residue lysine 15 coordinates ATP. Residues serine 62, aspartate 149, and asparagine 161 each contribute to the substrate site. An ATP-binding site is contributed by threonine 181–aspartate 182. In terms of domain architecture, PUA spans arginine 288–serine 366.

This sequence belongs to the glutamate 5-kinase family.

Its subcellular location is the cytoplasm. The enzyme catalyses L-glutamate + ATP = L-glutamyl 5-phosphate + ADP. It functions in the pathway amino-acid biosynthesis; L-proline biosynthesis; L-glutamate 5-semialdehyde from L-glutamate: step 1/2. Catalyzes the transfer of a phosphate group to glutamate to form L-glutamate 5-phosphate. In Delftia acidovorans (strain DSM 14801 / SPH-1), this protein is Glutamate 5-kinase.